Here is a 215-residue protein sequence, read N- to C-terminus: Protein C' (215 aa).

Positions 12 to 34 are disordered; that stretch reads MPSFLKKILKLRGRRQEDESRSR. The segment at 15–22 is involved in self-degradation and in host STAT1 degradation; it reads FLKKILKL. Basic and acidic residues predominate over residues 25 to 35; that stretch reads RRQEDESRSRM. Residues 36-66 show a composition bias toward polar residues; the sequence is LSDSSTQSYQVNQLTSEGTEAGSTIPSTPSK.

Belongs to the respirovirus protein C family. The different isoforms interact (via C-terminus) with unphosphorylated and phosphorylated human STAT1 (via N-terminus), favoring the formation of parallel STAT1 homodimers. The different isoforms do not interact with host STAT2. C protein interacts with L protein; this interaction has an inhibitory effect on viral transcription and replication. In terms of processing, protein Y1 is produced not only by alternative initiation, but also by proteolytic cleavage of C'. Only alternative initiation is detected in vitro, whereas in vivo cleavage seems to be predominant.

Its subcellular location is the host cytoplasm. Its function is as follows. The different products prevent the establishment of cellular antiviral state by blocking the interferon-alpha/beta (IFN-alpha/beta) and IFN-gamma signaling pathways. They inhibit IFN-alpha/beta induced tyrosine phosphorylation of STAT1 and STAT2. Blocking the IFN-alpha/beta pathway requires binding to STAT1 in the cytoplasm. They inhibit IFN-gamma induced serine phosphorylation of STAT1. Block the IFN-gamma pathway by binding to and stabilizing the parallel form of the STAT1 dimer, further inducing high-molecular-weight complex formation and inhibition of transcription by IFN-gamma. May also have a role in preventing the cell to enter apoptosis. Modulate regulation of viral transcription and replication. Overexpression inhibits the viral RNA polymerase. The absence of all C', C and Y1 proteins leads to viral delayed growth. Plays an important role in virion particles release. Modulates virion shape. The protein is Protein C' (P/V/C) of Sendai virus (strain Ohita) (SeV).